The following is a 503-amino-acid chain: UPF0522 protein C (503 aa).

The signal sequence occupies residues 1–18 (MKLFILIILSICLALVNS). N-linked (GlcNAc...) asparagine glycosylation is found at Asn-330, Asn-337, and Asn-370.

It belongs to the UPF0522 family.

The protein resides in the secreted. The polypeptide is UPF0522 protein C (Dictyostelium discoideum (Social amoeba)).